The sequence spans 511 residues: ATP synthase subunit alpha, plastid (511 aa).

170-177 (GDRQTGKT) contributes to the ATP binding site.

It belongs to the ATPase alpha/beta chains family. F-type ATPases have 2 components, CF(1) - the catalytic core - and CF(0) - the membrane proton channel. CF(1) has five subunits: alpha(3), beta(3), gamma(1), delta(1), epsilon(1). CF(0) has four main subunits: a, b, b' and c.

It localises to the plastid membrane. It catalyses the reaction ATP + H2O + 4 H(+)(in) = ADP + phosphate + 5 H(+)(out). In terms of biological role, produces ATP from ADP in the presence of a proton gradient across the membrane. The alpha chain is a regulatory subunit. The protein is ATP synthase subunit alpha, plastid of Cuscuta reflexa (Southern Asian dodder).